We begin with the raw amino-acid sequence, 308 residues long: Membrane protein insertase YidC 1 (308 aa).

A signal peptide spans 1–22; it reads MKSIKRFALSAMGAAMLLVLTG. Cysteine 23 carries the N-palmitoyl cysteine lipid modification. The S-diacylglycerol cysteine moiety is linked to residue cysteine 23. A run of 5 helical transmembrane segments spans residues 60–80, 135–155, 168–188, 211–225, and 230–252; these read FGVA…PLGI, FGGV…AIYF, YLGI…GVLY, MIYM…FSLF, and VTLY…NYIV. The disordered stretch occupies residues 263–308; that stretch reads ELAKNPSKASAFSTPSGRKDVTPEQPTAITSKKKHKNRNAGKQRSR. Residues 269–278 show a composition bias toward polar residues; it reads SKASAFSTPS. Over residues 293–308 the composition is skewed to basic residues; it reads SKKKHKNRNAGKQRSR.

The protein belongs to the OXA1/ALB3/YidC family. Type 2 subfamily.

The protein localises to the cell membrane. Functionally, required for the insertion and/or proper folding and/or complex formation of integral membrane proteins into the membrane. Involved in integration of membrane proteins that insert both dependently and independently of the Sec translocase complex, as well as at least some lipoproteins. The polypeptide is Membrane protein insertase YidC 1 (Streptococcus pneumoniae (strain ATCC BAA-255 / R6)).